A 372-amino-acid polypeptide reads, in one-letter code: Anhydro-N-acetylmuramic acid kinase (372 aa).

18 to 25 is an ATP binding site; the sequence is GTSLDGID.

The protein belongs to the anhydro-N-acetylmuramic acid kinase family.

The catalysed reaction is 1,6-anhydro-N-acetyl-beta-muramate + ATP + H2O = N-acetyl-D-muramate 6-phosphate + ADP + H(+). It functions in the pathway amino-sugar metabolism; 1,6-anhydro-N-acetylmuramate degradation. It participates in cell wall biogenesis; peptidoglycan recycling. In terms of biological role, catalyzes the specific phosphorylation of 1,6-anhydro-N-acetylmuramic acid (anhMurNAc) with the simultaneous cleavage of the 1,6-anhydro ring, generating MurNAc-6-P. Is required for the utilization of anhMurNAc either imported from the medium or derived from its own cell wall murein, and thus plays a role in cell wall recycling. The chain is Anhydro-N-acetylmuramic acid kinase from Thiobacillus denitrificans (strain ATCC 25259 / T1).